A 266-amino-acid chain; its full sequence is Glucosamine-6-phosphate deaminase (266 aa).

Aspartate 72 acts as the Proton acceptor; for enolization step in catalysis. Residue aspartate 141 is the For ring-opening step of the active site. Histidine 143 acts as the Proton acceptor; for ring-opening step in catalysis. The active-site For ring-opening step is the glutamate 148.

The protein belongs to the glucosamine/galactosamine-6-phosphate isomerase family. NagB subfamily. As to quaternary structure, homohexamer.

The catalysed reaction is alpha-D-glucosamine 6-phosphate + H2O = beta-D-fructose 6-phosphate + NH4(+). It participates in amino-sugar metabolism; N-acetylneuraminate degradation; D-fructose 6-phosphate from N-acetylneuraminate: step 5/5. With respect to regulation, allosterically activated by N-acetylglucosamine 6-phosphate (GlcNAc6P). In terms of biological role, catalyzes the reversible isomerization-deamination of glucosamine 6-phosphate (GlcN6P) to form fructose 6-phosphate (Fru6P) and ammonium ion. The sequence is that of Glucosamine-6-phosphate deaminase from Pectobacterium atrosepticum (strain SCRI 1043 / ATCC BAA-672) (Erwinia carotovora subsp. atroseptica).